Here is a 398-residue protein sequence, read N- to C-terminus: Serpin-Z1A (398 aa).

Residues 343–367 (GTEAAASTAIKMVLQQARPPSVMDF) are RCL.

The protein belongs to the serpin family.

In terms of biological role, inhibits chymotrypsin and cathepsin G in vitro. The sequence is that of Serpin-Z1A (WZCI) from Triticum aestivum (Wheat).